A 425-amino-acid chain; its full sequence is Polyadenylate-binding protein RBP47B' (425 aa).

RRM domains lie at 24-102 (RTLW…LNWA), 116-195 (HSIF…AATP), and 237-309 (TTIS…WSKN).

Belongs to the polyadenylate-binding RBP47 family. Interacts with the poly(A) tail of mRNA in nucleus.

Its subcellular location is the nucleus. The protein localises to the cytoplasmic granule. In terms of biological role, heterogeneous nuclear ribonucleoprotein (hnRNP)-protein binding the poly(A) tail of mRNA and probably involved in some steps of pre-mRNA maturation. This is Polyadenylate-binding protein RBP47B' (RBP47B') from Arabidopsis thaliana (Mouse-ear cress).